The primary structure comprises 219 residues: Probable GTP-binding protein EngB (219 aa).

Positions 24–207 constitute an EngB-type G domain; that stretch reads VQPEIAFAGR…HALIESWLRP (184 aa). GTP contacts are provided by residues 32 to 39, 59 to 63, 81 to 84, 148 to 151, and 185 to 188; these read GRSNAGKS, GRTQH, DLPG, TKCD, and LFSA. Residues Ser39 and Thr61 each contribute to the Mg(2+) site.

The protein belongs to the TRAFAC class TrmE-Era-EngA-EngB-Septin-like GTPase superfamily. EngB GTPase family. Mg(2+) serves as cofactor.

Necessary for normal cell division and for the maintenance of normal septation. In Burkholderia thailandensis (strain ATCC 700388 / DSM 13276 / CCUG 48851 / CIP 106301 / E264), this protein is Probable GTP-binding protein EngB.